The chain runs to 391 residues: 4-coumarate--CoA ligase (391 aa).

This sequence belongs to the ATP-dependent AMP-binding enzyme family.

It catalyses the reaction (E)-4-coumarate + ATP + CoA = (E)-4-coumaroyl-CoA + AMP + diphosphate. Converts p-coumaric acid into p-coumaryl CoA. This is necessary for the activation of the photoactive yellow protein (PYP) chromophore. The chain is 4-coumarate--CoA ligase (pcl) from Halorhodospira halophila (Ectothiorhodospira halophila).